Here is a 276-residue protein sequence, read N- to C-terminus: Undecaprenyl-diphosphatase 1 (276 aa).

A run of 5 helical transmembrane segments spans residues 83–103 (FTLN…LFEK), 108–128 (VLFS…IILW), 187–207 (VATE…TLYE), 217–237 (VDSL…AFVC), and 252–272 (VFAW…YSGW).

It belongs to the UppP family.

Its subcellular location is the cell inner membrane. The enzyme catalyses di-trans,octa-cis-undecaprenyl diphosphate + H2O = di-trans,octa-cis-undecaprenyl phosphate + phosphate + H(+). Catalyzes the dephosphorylation of undecaprenyl diphosphate (UPP). Confers resistance to bacitracin. The chain is Undecaprenyl-diphosphatase 1 from Burkholderia cenocepacia (strain HI2424).